The chain runs to 442 residues: Large ribosomal subunit protein mL65 (442 aa).

It belongs to the mitochondrion-specific ribosomal protein mL65 family. In terms of assembly, component of the mitochondrial ribosome small subunit (28S) which comprises a 12S rRNA and about 30 distinct proteins.

Its subcellular location is the mitochondrion. The sequence is that of Large ribosomal subunit protein mL65 (Mrps30) from Mus musculus (Mouse).